A 376-amino-acid chain; its full sequence is ATP phosphoribosyltransferase regulatory subunit (376 aa).

Belongs to the class-II aminoacyl-tRNA synthetase family. HisZ subfamily. As to quaternary structure, heteromultimer composed of HisG and HisZ subunits.

Its subcellular location is the cytoplasm. The protein operates within amino-acid biosynthesis; L-histidine biosynthesis; L-histidine from 5-phospho-alpha-D-ribose 1-diphosphate: step 1/9. Functionally, required for the first step of histidine biosynthesis. May allow the feedback regulation of ATP phosphoribosyltransferase activity by histidine. In Brucella anthropi (strain ATCC 49188 / DSM 6882 / CCUG 24695 / JCM 21032 / LMG 3331 / NBRC 15819 / NCTC 12168 / Alc 37) (Ochrobactrum anthropi), this protein is ATP phosphoribosyltransferase regulatory subunit.